The following is a 623-amino-acid chain: Chaperone protein HtpG (623 aa).

Positions 1–330 (MIMTQEKKKF…SEDLPLNISR (330 aa)) are a; substrate-binding. The segment at 331–546 (ESLQHNSVLE…DAAMDIRMER (216 aa)) is b. Positions 477-497 (SDIDVEQTTSQSEEKNTDSKK) are disordered. Residues 488 to 497 (SEEKNTDSKK) show a composition bias toward basic and acidic residues. The c stretch occupies residues 547 to 623 (FLIEQKQIAN…LNDIVQKAIL (77 aa)).

This sequence belongs to the heat shock protein 90 family. Homodimer.

The protein resides in the cytoplasm. Functionally, molecular chaperone. Has ATPase activity. This is Chaperone protein HtpG from Rickettsia massiliae (strain Mtu5).